The chain runs to 189 residues: CASP-like protein 1U2 (189 aa).

Over 1-24 (MFGSDDSGCHVMDDDVAPPANGSK) the chain is Cytoplasmic. Residues 25-45 (AVTLLLRLITLALALTSAVLM) traverse the membrane as a helical segment. The Extracellular portion of the chain corresponds to 46 to 71 (ATASECTIYGLDGATATTVTFKDYQP). A helical transmembrane segment spans residues 72 to 92 (FIYLVGSNIAATILEVAAIYV). Residues 93-109 (QVGKGDDVEDAPMIPRV) lie on the Cytoplasmic side of the membrane. The helical transmembrane segment at 110-130 (VLVVVDVAVQMLLYSATGAVF) threads the bilayer. At 131 to 158 (AAVMAYGPQISACTGAAGHFCEQVQRSK) the chain is on the extracellular side. A helical membrane pass occupies residues 159–179 (IISLAASLSAVLAAVAKDVAL). At 180-189 (PCSVWPHPSS) the chain is on the cytoplasmic side.

It belongs to the Casparian strip membrane proteins (CASP) family. Homodimer and heterodimers.

It localises to the cell membrane. The polypeptide is CASP-like protein 1U2 (Sorghum bicolor (Sorghum)).